We begin with the raw amino-acid sequence, 94 residues long: Protein SpdA (94 aa).

The helical transmembrane segment at Gly-41–Ala-68 threads the bilayer.

The protein localises to the cell membrane. In terms of biological role, involved in plasmid transfer. The protein is Protein SpdA (spdA) of Streptomyces lividans.